A 1068-amino-acid chain; its full sequence is TSC22 domain family protein 1 (1068 aa).

Residues 1 to 98 (MHQPPESTAA…SQAQLQAQPL (98 aa)) form a required for interaction with TGFBR1 and promotion of TGF-beta signaling region. Disordered stretches follow at residues 23–110 (AHPA…KKSG), 125–288 (ISSN…SPAS), and 602–623 (YSQAAPPVQTPLPGAPPPQQLQ). A compositionally biased stretch (low complexity) spans 36 to 55 (GSASALNAAGTGVGSSATSS). Residues 58-70 (FPPPSLLQPPPPA) show a composition bias toward pro residues. A compositionally biased stretch (low complexity) spans 84-100 (SLNLLSQAQLQAQPLAP). Residues 133–142 (EDTESYDDLD) are compositionally biased toward acidic residues. Residues 216-240 (HPHHLHHHHHIHHGHHLQHGHHHPS) are compositionally biased toward basic residues. Positions 241–250 (HVAVASASIP) are enriched in low complexity. Positions 261–271 (KLSTTGSSDSI) are enriched in polar residues. A Phosphoserine modification is found at S263. Over residues 272–288 (TPVAPTSAVSSSGSPAS) the composition is skewed to low complexity. Positions 609-620 (VQTPLPGAPPPQ) are enriched in pro residues. Residues 1000 to 1021 (VLKEQIKELIEKNSQLEQENNL) are leucine-zipper. A disordered region spans residues 1032–1068 (AQFQAQLQTGSPPATTQPQGTTQPPAQPASQGSGPTA). Residues 1039–1068 (QTGSPPATTQPQGTTQPPAQPASQGSGPTA) are compositionally biased toward low complexity.

It belongs to the TSC-22/Dip/Bun family. As to quaternary structure, forms homodimers. Forms heterodimers. Component of a complex composed of TSC22D1 (via N-terminus), TGFBR1 and TGFBR2; the interaction between TSC22D1 and TGFBR1 is inhibited by SMAD7 and promoted by TGFB1. Interacts with SMAD7; the interaction requires TGF-beta and the interaction is inhibited by TGFBR1. Interacts with TPT1/fortilin; interaction results in the destabilization of TSC22D1 protein and prevents TSC22D1-mediated apoptosis. Interacts with SMAD4 (via N-terminus). Interacts with ACVRL1/ALK1, ACVR1/ALK2, BMPR1A/ALK3, ACVR1B/ALK4, BMPR1B/ALK6, ACVR2A/ACTRII, and BMPR2. Interacts with SMAD6. Interacts with TFE3; the interaction is enhanced in the presence of TGF-beta. In terms of assembly, forms a heterodimer with TSC22D4/THG1. Forms a heterodimer with TSC22D4/THG1. Interacts with histone H1-2. Interacts with GNL3.

The protein localises to the cytoplasm. It localises to the nucleus. It is found in the cell membrane. Its subcellular location is the mitochondrion. Functionally, transcriptional repressor. Acts on the C-type natriuretic peptide (CNP) promoter. Acts to promote CASP3-mediated apoptosis. Positively regulates TGF-beta signaling by interacting with SMAD7 which inhibits binding of SMAD7 to TGFBR1, preventing recruitment of SMURF ubiquitin ligases to TGFBR1 and inhibiting SMURF-mediated ubiquitination and degradation of TGFBR1. Contributes to enhancement of TGF-beta signaling by binding to and modulating the transcription activator activity of SMAD4. Promotes TGF-beta-induced transcription of COL1A2; via its interaction with TFE3 at E-boxes in the gene proximal promoter. Plays a role in the repression of hematopoietic precursor cell growth. Promotes IL2 deprivation-induced apoptosis in T-lymphocytes, via repression of TSC22D3/GILZ transcription and activation of the caspase cascade. Its function is as follows. May act to negatively regulate TGFB3 signaling and thereby inhibit cell death in mammary gland cells. In terms of biological role, positively regulates cell death in response to TGFB3 during mammary gland involution. The sequence is that of TSC22 domain family protein 1 from Macaca fascicularis (Crab-eating macaque).